Reading from the N-terminus, the 355-residue chain is Protein RecA (355 aa).

65–72 provides a ligand contact to ATP; the sequence is GPESSGKT.

Belongs to the RecA family.

Its subcellular location is the cytoplasm. Its function is as follows. Can catalyze the hydrolysis of ATP in the presence of single-stranded DNA, the ATP-dependent uptake of single-stranded DNA by duplex DNA, and the ATP-dependent hybridization of homologous single-stranded DNAs. It interacts with LexA causing its activation and leading to its autocatalytic cleavage. This Pseudomonas putida (strain ATCC 47054 / DSM 6125 / CFBP 8728 / NCIMB 11950 / KT2440) protein is Protein RecA.